The chain runs to 121 residues: RxLR effector protein PexRD2 (121 aa).

Residues 1–20 (MRLSYVIVVIATSFLVTTEA) form the signal peptide. The RxLR-dEER signature appears at 38–56 (RLLRKHYTAAENDDDSEAR). Positions 57–121 (ALNTEKMKTM…LNYVAEHTAV (65 aa)) are WY domain.

Belongs to the RxLR effector family. Homodimer. Interacts with host MAPKKK epsilon (via its kinase domain).

It localises to the secreted. The protein resides in the host cytoplasm. It is found in the host nucleus. Functionally, effector that enhances P.infestans colonization of Nicotiana benthamiana leaves. Induces a weak Cell death response in N.benthamiana. PexRD2-induced cell death is dependent on SGT1, suggesting that PexRD2 is recognized by the plant immune system. Interacts with the kinase domain of the host MAPKKK epsilon, a positive regulator of cell death associated with plant immunity, and perturbs signaling pathways triggered by MAPKKK epsilon. This Phytophthora infestans (strain T30-4) (Potato late blight agent) protein is RxLR effector protein PexRD2.